The primary structure comprises 205 residues: Peptidyl-tRNA hydrolase (205 aa).

Tyr14 provides a ligand contact to tRNA. The Proton acceptor role is filled by His19. TRNA is bound by residues Tyr68, Asn70, and Asn116.

The protein belongs to the PTH family. In terms of assembly, monomer.

The protein localises to the cytoplasm. The catalysed reaction is an N-acyl-L-alpha-aminoacyl-tRNA + H2O = an N-acyl-L-amino acid + a tRNA + H(+). Its function is as follows. Hydrolyzes ribosome-free peptidyl-tRNAs (with 1 or more amino acids incorporated), which drop off the ribosome during protein synthesis, or as a result of ribosome stalling. Functionally, catalyzes the release of premature peptidyl moieties from peptidyl-tRNA molecules trapped in stalled 50S ribosomal subunits, and thus maintains levels of free tRNAs and 50S ribosomes. This chain is Peptidyl-tRNA hydrolase, found in Caulobacter vibrioides (strain ATCC 19089 / CIP 103742 / CB 15) (Caulobacter crescentus).